We begin with the raw amino-acid sequence, 179 residues long: MARLYDFYKDSVVPELMKQFGYKSIMQVPRIEKITVNMGVGEAVADKKVMEFAVGDLEKIAGQKPVVTTARKSIAGFKIRDDYPVGCKVTLRRERMYEFLDRLVTIALPRVRDFRGVSAKSFDGRGNYNMGVKEQIIFPEIEYDKIDALRGMNITITTSAKTDEEARALLAAFKFPFKG.

Belongs to the universal ribosomal protein uL5 family. As to quaternary structure, part of the 50S ribosomal subunit; part of the 5S rRNA/L5/L18/L25 subcomplex. Contacts the 5S rRNA and the P site tRNA. Forms a bridge to the 30S subunit in the 70S ribosome.

This is one of the proteins that bind and probably mediate the attachment of the 5S RNA into the large ribosomal subunit, where it forms part of the central protuberance. In the 70S ribosome it contacts protein S13 of the 30S subunit (bridge B1b), connecting the 2 subunits; this bridge is implicated in subunit movement. Contacts the P site tRNA; the 5S rRNA and some of its associated proteins might help stabilize positioning of ribosome-bound tRNAs. This is Large ribosomal subunit protein uL5 from Chromobacterium violaceum (strain ATCC 12472 / DSM 30191 / JCM 1249 / CCUG 213 / NBRC 12614 / NCIMB 9131 / NCTC 9757 / MK).